Here is an 855-residue protein sequence, read N- to C-terminus: MICAL-like protein 1 (855 aa).

One can recognise a Calponin-homology (CH) domain in the interval 2 to 108 (AGPRGALLAW…YVSQYYNHFT (107 aa)). 3 disordered regions span residues 110–165 (SGQA…SSAC), 226–253 (GRSG…EDSD), and 269–659 (QASS…HGFP). Residues 124–135 (PAAPSPTSTSPA) show a composition bias toward low complexity. One can recognise an LIM zinc-binding domain in the interval 163-226 (SACAACGQRV…ERCTRLGLGG (64 aa)). Positions 269-278 (QASSEVQPHT) are enriched in polar residues. Ser-293 and Ser-307 each carry phosphoserine. Positions 308-325 (ESSALTPPTPRPRSSLQQ) are enriched in polar residues. Phosphothreonine is present on residues Thr-313 and Thr-316. The segment covering 356–367 (LSERMTAPRKDP) has biased composition (basic and acidic residues). The short motif at 423 to 425 (NPF) is the NPF1 element. Residues 425-434 (FEEEEEEEEA) are compositionally biased toward acidic residues. A compositionally biased stretch (pro residues) spans 439-449 (VPSPAPAPPET). Residues Thr-461 and Thr-463 each carry the phosphothreonine modification. Ser-464, Ser-465, Ser-478, and Ser-480 each carry phosphoserine. A compositionally biased stretch (low complexity) spans 499–514 (PSPALSVESLSSESSS). Polar residues predominate over residues 542–554 (PGTSANSVTPSAH). The segment covering 555 to 570 (SSLSSSGELGQPSGEQ) has biased composition (low complexity). Position 613 is a phosphoserine (Ser-613). Residues 625 to 627 (NPF) carry the NPF2 motif. The tract at residues 644 to 855 (KGAKPVRPPA…AKSKAPTGKS (212 aa)) is mediates the interaction with RAB13 and intramolecular interaction with the calponin-homology (CH) domain. Residues 663-810 (RKVQADQYIP…EEEEDKMLET (148 aa)) enclose the bMERB domain. Positions 679–703 (EMDSIERQLDALEHSGVLLEEKLRG) form a coiled coil. A phosphoserine mark is found at Ser-682 and Ser-732. A necessary and sufficient to associate with tubular recycling endosome membranes, mediate phosphatidic acid-binding and membrane tubulation region spans residues 692–855 (HSGVLLEEKL…AKSKAPTGKS (164 aa)). Positions 794 to 822 (LDEDRQREEEEDKMLETMIKKKDFQREAE) form a coiled coil. The segment covering 815–826 (KDFQREAESDSK) has biased composition (basic and acidic residues). The tract at residues 815–855 (KDFQREAESDSKKKGKFKTMKVLKLLGNKRDAKSKAPTGKS) is disordered.

Homooligomer. Interacts (via NPF1 motif) with EHD1 (via EH domain); the interaction is direct and probably recruits EHD1 to membranes. Interacts with EHD3 (via EH domain). Interacts with RAB35 (GTP-bound form); the interaction is direct and probably recruits MICALL1 to membranes. Interacts with ACAP2; the interaction is indirect through RAB35. Interacts with RAB8A (GTP-bound form); regulates RAB8A association with recycling endosomes. Interacts with RAB13 (GTP-bound form). Interacts with ARF6 (GTP-bound form). Interacts with PACSIN2 (via the SH3 domain). Interacts with DPYSL2.

The protein localises to the recycling endosome membrane. It is found in the late endosome membrane. Its subcellular location is the cell projection. It localises to the cilium membrane. The protein resides in the cytoplasm. The protein localises to the cytoskeleton. It is found in the microtubule organizing center. Its subcellular location is the centrosome. It localises to the centriole. Its function is as follows. Lipid-binding protein with higher affinity for phosphatidic acid, a lipid enriched in recycling endosome membranes. On endosome membranes, acts as a downstream effector of Rab proteins recruiting cytosolic proteins to regulate membrane tubulation. Involved in a late step of receptor-mediated endocytosis regulating for instance endocytosed-EGF receptor trafficking. Alternatively, regulates slow endocytic recycling of endocytosed proteins back to the plasma membrane. Also involved in cargo protein delivery to the plasma membrane. Plays a role in ciliogenesis coordination, recruits EHD1 to primary cilium where it is anchored to the centriole through interaction with tubulins. May indirectly play a role in neurite outgrowth. The chain is MICAL-like protein 1 (Micall1) from Rattus norvegicus (Rat).